We begin with the raw amino-acid sequence, 315 residues long: Calumenin-A (315 aa).

An N-terminal signal peptide occupies residues 1–19; it reads MEIRPLLMCFALCVVYATS. 6 consecutive EF-hand domains span residues 68 to 103, 104 to 139, 151 to 186, 188 to 223, 229 to 264, and 265 to 300; these read ESKN…AQKK, YIYD…TYLD, QMMA…EEYE, MKDI…HEDE, WVAT…ADYD, and HAEA…FVGS. D81, D83, D85, E92, D117, N119, D121, M123, and E128 together coordinate Ca(2+). The N-linked (GlcNAc...) asparagine glycan is linked to N131. Residues D164, N166, D168, E175, D201, N203, D205, E212, D242, N244, D246, K248, E253, D278, N280, D282, K284, and E289 each coordinate Ca(2+). The short motif at 312-315 is the Prevents secretion from ER element; the sequence is HDEF.

The protein belongs to the CREC family. In terms of assembly, interacts with ggcx.

It is found in the endoplasmic reticulum membrane. It localises to the golgi apparatus. Its subcellular location is the secreted. The protein resides in the melanosome. The protein localises to the sarcoplasmic reticulum lumen. Its function is as follows. Involved in regulation of vitamin K-dependent carboxylation of multiple N-terminal glutamate residues. Seems to inhibit gamma-carboxylase ggcx. Binds 7 calcium ions with a low affinity. The protein is Calumenin-A (calua) of Danio rerio (Zebrafish).